Reading from the N-terminus, the 212-residue chain is Imidazole glycerol phosphate synthase subunit HisH (212 aa).

The region spanning 2-212 is the Glutamine amidotransferase type-1 domain; it reads LTAIIDYESG…MIGNFLTWTP (211 aa). Cys-87 serves as the catalytic Nucleophile. Catalysis depends on residues His-192 and Glu-194.

As to quaternary structure, heterodimer of HisH and HisF.

It localises to the cytoplasm. It carries out the reaction 5-[(5-phospho-1-deoxy-D-ribulos-1-ylimino)methylamino]-1-(5-phospho-beta-D-ribosyl)imidazole-4-carboxamide + L-glutamine = D-erythro-1-(imidazol-4-yl)glycerol 3-phosphate + 5-amino-1-(5-phospho-beta-D-ribosyl)imidazole-4-carboxamide + L-glutamate + H(+). The catalysed reaction is L-glutamine + H2O = L-glutamate + NH4(+). It functions in the pathway amino-acid biosynthesis; L-histidine biosynthesis; L-histidine from 5-phospho-alpha-D-ribose 1-diphosphate: step 5/9. Functionally, IGPS catalyzes the conversion of PRFAR and glutamine to IGP, AICAR and glutamate. The HisH subunit catalyzes the hydrolysis of glutamine to glutamate and ammonia as part of the synthesis of IGP and AICAR. The resulting ammonia molecule is channeled to the active site of HisF. The protein is Imidazole glycerol phosphate synthase subunit HisH of Ruegeria pomeroyi (strain ATCC 700808 / DSM 15171 / DSS-3) (Silicibacter pomeroyi).